The primary structure comprises 170 residues: tRNA-splicing endonuclease (170 aa).

Active-site residues include Y110, H116, and K147.

Belongs to the tRNA-intron endonuclease family. Archaeal short subfamily. In terms of assembly, homotetramer; although the tetramer contains four active sites, only two participate in the cleavage. Therefore, it should be considered as a dimer of dimers.

It carries out the reaction pretRNA = a 3'-half-tRNA molecule with a 5'-OH end + a 5'-half-tRNA molecule with a 2',3'-cyclic phosphate end + an intron with a 2',3'-cyclic phosphate and a 5'-hydroxyl terminus.. Its function is as follows. Endonuclease that removes tRNA introns. Cleaves pre-tRNA at the 5'- and 3'-splice sites to release the intron. The products are an intron and two tRNA half-molecules bearing 2',3' cyclic phosphate and 5'-OH termini. Recognizes a pseudosymmetric substrate in which 2 bulged loops of 3 bases are separated by a stem of 4 bp. The polypeptide is tRNA-splicing endonuclease (Pyrococcus abyssi (strain GE5 / Orsay)).